We begin with the raw amino-acid sequence, 371 residues long: Histidinol-phosphate aminotransferase (371 aa).

Lys232 is modified (N6-(pyridoxal phosphate)lysine).

This sequence belongs to the class-II pyridoxal-phosphate-dependent aminotransferase family. Histidinol-phosphate aminotransferase subfamily. Homodimer. Pyridoxal 5'-phosphate serves as cofactor.

The enzyme catalyses L-histidinol phosphate + 2-oxoglutarate = 3-(imidazol-4-yl)-2-oxopropyl phosphate + L-glutamate. It participates in amino-acid biosynthesis; L-histidine biosynthesis; L-histidine from 5-phospho-alpha-D-ribose 1-diphosphate: step 7/9. In Methylibium petroleiphilum (strain ATCC BAA-1232 / LMG 22953 / PM1), this protein is Histidinol-phosphate aminotransferase.